The following is a 150-amino-acid chain: Transcriptional repressor NrdR (150 aa).

A zinc finger spans residues cysteine 3 to cysteine 34. One can recognise an ATP-cone domain in the interval isoleucine 49 to glutamate 139.

It belongs to the NrdR family. Zn(2+) is required as a cofactor.

Negatively regulates transcription of bacterial ribonucleotide reductase nrd genes and operons by binding to NrdR-boxes. The sequence is that of Transcriptional repressor NrdR from Dictyoglomus turgidum (strain DSM 6724 / Z-1310).